An 87-amino-acid polypeptide reads, in one-letter code: MLFYCVLLYGLCLRFLLFSFRYFMCPRLPSSGNRMIGCLLLLLFYSFWLLRCFFIFFLVSCFIYVVEGGGFIDLPSLRYFTRLFYFV.

This sequence belongs to the universal ribosomal protein uS12 family.

The protein localises to the mitochondrion matrix. It is found in the kinetoplast. Its function is as follows. Protein S12 is involved in the translation initiation step. The chain is Small ribosomal subunit protein uS12m (RPS12) from Trypanoplasma borreli.